A 635-amino-acid chain; its full sequence is 1-deoxy-D-xylulose-5-phosphate synthase (635 aa).

Residues His72 and Gly113–Ala115 each bind thiamine diphosphate. A Mg(2+)-binding site is contributed by Asp144. Residues Gly145 to Ala146, Asn174, Tyr286, and Glu369 each bind thiamine diphosphate. Asn174 contacts Mg(2+).

It belongs to the transketolase family. DXPS subfamily. Homodimer. It depends on Mg(2+) as a cofactor. Thiamine diphosphate serves as cofactor.

The catalysed reaction is D-glyceraldehyde 3-phosphate + pyruvate + H(+) = 1-deoxy-D-xylulose 5-phosphate + CO2. Its pathway is metabolic intermediate biosynthesis; 1-deoxy-D-xylulose 5-phosphate biosynthesis; 1-deoxy-D-xylulose 5-phosphate from D-glyceraldehyde 3-phosphate and pyruvate: step 1/1. Functionally, catalyzes the acyloin condensation reaction between C atoms 2 and 3 of pyruvate and glyceraldehyde 3-phosphate to yield 1-deoxy-D-xylulose-5-phosphate (DXP). The protein is 1-deoxy-D-xylulose-5-phosphate synthase of Acaryochloris marina (strain MBIC 11017).